Consider the following 1835-residue polypeptide: Urea amidolyase (1835 aa).

ATP contacts are provided by residues 122-129 (GAIIVGKT) and Lys747. One can recognise a Biotin carboxylation domain in the interval 632-1075 (LFDTVLIANR…STNILNSYQY (444 aa)). The 198-residue stretch at 751 to 948 (RQIAQKAGVP…LVEWMIRIAA (198 aa)) folds into the ATP-grasp domain. Ser803 carries the post-translational modification Phosphoserine. Positions 830 and 865 each coordinate ATP. In terms of domain architecture, Biotinyl-binding spans 1754-1832 (DEEEDFPEGA…DSGDIVAVIE (79 aa)). Lys1798 bears the N6-biotinyllysine mark.

In terms of assembly, monomer. The cofactor is biotin.

The enzyme catalyses urea + hydrogencarbonate + ATP = urea-1-carboxylate + ADP + phosphate + H(+). It catalyses the reaction urea-1-carboxylate + H2O + 3 H(+) = 2 NH4(+) + 2 CO2. It participates in nitrogen metabolism; urea degradation; CO(2) and NH(3) from urea (allophanate route): step 1/2. It functions in the pathway nitrogen metabolism; urea degradation; CO(2) and NH(3) from urea (allophanate route): step 2/2. In terms of biological role, hydrolysis of urea to ammonia and CO(2). The sequence is that of Urea amidolyase (DUR1,2) from Saccharomyces cerevisiae (strain ATCC 204508 / S288c) (Baker's yeast).